Consider the following 417-residue polypeptide: UDP-N-acetylglucosamine 1-carboxyvinyltransferase 2 (417 aa).

22–23 provides a ligand contact to phosphoenolpyruvate; the sequence is KN. Residue Arg-94 participates in UDP-N-acetyl-alpha-D-glucosamine binding. Cys-118 serves as the catalytic Proton donor. Cys-118 carries the post-translational modification 2-(S-cysteinyl)pyruvic acid O-phosphothioketal. UDP-N-acetyl-alpha-D-glucosamine is bound by residues 123 to 127, Asp-306, and Ile-328; that span reads RPIDL.

It belongs to the EPSP synthase family. MurA subfamily.

It is found in the cytoplasm. It carries out the reaction phosphoenolpyruvate + UDP-N-acetyl-alpha-D-glucosamine = UDP-N-acetyl-3-O-(1-carboxyvinyl)-alpha-D-glucosamine + phosphate. Its pathway is cell wall biogenesis; peptidoglycan biosynthesis. Functionally, cell wall formation. Adds enolpyruvyl to UDP-N-acetylglucosamine. The sequence is that of UDP-N-acetylglucosamine 1-carboxyvinyltransferase 2 from Clostridium tetani (strain Massachusetts / E88).